A 65-amino-acid polypeptide reads, in one-letter code: Large ribosomal subunit protein bL32 (65 aa).

The protein belongs to the bacterial ribosomal protein bL32 family.

In Tropheryma whipplei (strain TW08/27) (Whipple's bacillus), this protein is Large ribosomal subunit protein bL32.